Here is a 353-residue protein sequence, read N- to C-terminus: Membrane lipoprotein TmpC (353 aa).

The N-terminal stretch at methionine 1 to glycine 20 is a signal peptide. Residue cysteine 21 is the site of N-palmitoyl cysteine attachment. The S-diacylglycerol cysteine moiety is linked to residue cysteine 21. Aspartate 47 lines the guanosine pocket. Inosine is bound at residue aspartate 47. Residues aspartate 47 to serine 48 and phenylalanine 56 contribute to the adenosine site. Guanosine contacts are provided by asparagine 57, aspartate 128, phenylalanine 206, glycine 232, aspartate 258, and lysine 280. Residues asparagine 57 and aspartate 128 each contribute to the inosine site. Residues aspartate 128, phenylalanine 206, glycine 232, aspartate 258, and lysine 280 each coordinate adenosine. Residues glycine 232, aspartate 258, and lysine 280 each coordinate inosine.

Belongs to the BMP lipoprotein family. In terms of assembly, monomer.

The protein resides in the cell membrane. Binds purine nucleosides and may play a role in purine nucleoside uptake. May be part of an ABC-type nucleoside uptake system. Has highest affinity for guanosine, followed by inosine and adenosine. Has very low affinity for cytidine and does not bind thymidine. The sequence is that of Membrane lipoprotein TmpC (tmpC) from Treponema pallidum (strain Nichols).